Here is a 369-residue protein sequence, read N- to C-terminus: MPEQKPYRIIISGGGTGGHIYPAVAIANAIKARFPDSEILFVGAQGRMEMQKVPAAGYNIEGLWISGIQRKLSLDNLAFPLKVIASYFKAKKIVSTFKPDIAIGVGGYASWPLLQAANASGVATLIQEQNSYAGVANKALSKKVKAICVAYERMERFFPGDKIVYTGNPVRKDIVDYKKYSEGAHTFFGLKPGVPTLFVMGGSLGARTINLSIERNLEQLKNAGIQVLWQTGKFYYEGLKQYNSETIKVTDFIADMNRAYAMADVIVSRAGALSISELSIVGKPCILVPSPNVAEDHQTKNALALSEKQAAWMVKDMNAPEELVQKALELMKNQDAQHTLSKNILTFARPDATERIVNKVFEIINTDRK.

Residues 16 to 18, Asn130, Arg171, Ser203, Ile253, and Gln298 contribute to the UDP-N-acetyl-alpha-D-glucosamine site; that span reads TGG.

This sequence belongs to the glycosyltransferase 28 family. MurG subfamily.

It localises to the cell inner membrane. The enzyme catalyses di-trans,octa-cis-undecaprenyl diphospho-N-acetyl-alpha-D-muramoyl-L-alanyl-D-glutamyl-meso-2,6-diaminopimeloyl-D-alanyl-D-alanine + UDP-N-acetyl-alpha-D-glucosamine = di-trans,octa-cis-undecaprenyl diphospho-[N-acetyl-alpha-D-glucosaminyl-(1-&gt;4)]-N-acetyl-alpha-D-muramoyl-L-alanyl-D-glutamyl-meso-2,6-diaminopimeloyl-D-alanyl-D-alanine + UDP + H(+). It participates in cell wall biogenesis; peptidoglycan biosynthesis. In terms of biological role, cell wall formation. Catalyzes the transfer of a GlcNAc subunit on undecaprenyl-pyrophosphoryl-MurNAc-pentapeptide (lipid intermediate I) to form undecaprenyl-pyrophosphoryl-MurNAc-(pentapeptide)GlcNAc (lipid intermediate II). This Cytophaga hutchinsonii (strain ATCC 33406 / DSM 1761 / CIP 103989 / NBRC 15051 / NCIMB 9469 / D465) protein is UDP-N-acetylglucosamine--N-acetylmuramyl-(pentapeptide) pyrophosphoryl-undecaprenol N-acetylglucosamine transferase.